The sequence spans 79 residues: Acyl carrier protein (79 aa).

The Carrier domain maps to 2–77 (SDIEARVRKI…SAIDYANTHQ (76 aa)). Serine 37 carries the O-(pantetheine 4'-phosphoryl)serine modification.

Belongs to the acyl carrier protein (ACP) family. Post-translationally, 4'-phosphopantetheine is transferred from CoA to a specific serine of apo-ACP by AcpS. This modification is essential for activity because fatty acids are bound in thioester linkage to the sulfhydryl of the prosthetic group.

The protein resides in the cytoplasm. It functions in the pathway lipid metabolism; fatty acid biosynthesis. Its function is as follows. Carrier of the growing fatty acid chain in fatty acid biosynthesis. In Verminephrobacter eiseniae (strain EF01-2), this protein is Acyl carrier protein.